The following is a 123-amino-acid chain: UPF0102 protein VFMJ11_2324 (123 aa).

It belongs to the UPF0102 family.

This Aliivibrio fischeri (strain MJ11) (Vibrio fischeri) protein is UPF0102 protein VFMJ11_2324.